A 150-amino-acid chain; its full sequence is Retinal rod rhodopsin-sensitive cGMP 3',5'-cyclic phosphodiesterase subunit delta (150 aa).

Positions 144-150 are required for association with membranes; sequence RVRLFYV.

The protein belongs to the PDE6D/unc-119 family. Interacts with the prenylated catalytic subunits of PDE6, an oligomer composed of two catalytic chains (PDE6A and PDE6B) and two inhibitory chains (gamma); has no effect on enzyme activity but promotes the release of the prenylated enzyme from cell membrane. Interacts with prenylated GRK1 and GRK7. Interacts with prenylated Ras family members, including RAP2A and RAP2C. Interacts with prenylated RHEB and NRAS. Interacts with prenylated HRAS and KRAS. Interacts with RAB13 (prenylated form); dissociates RAB13 from membranes. Interacts with prenylated INPP5E. Interacts with RAB28 (prenylated form); the interaction promotes RAB28 delivery to the photoreceptor outer segments. Interacts with RPGR. Interacts with ARL2. Interacts with ARL3; the interaction occurs specifically with the GTP-bound form of ARL3. Interaction with ARL2 and ARL3 promotes release of farnesylated cargo proteins. In terms of tissue distribution, widely expressed. Detected in various tissues including spleen, prostate gland, testis, ovary, small intestine, colon, retina, and peripheral blood.

The protein resides in the cytoplasm. Its subcellular location is the cytosol. The protein localises to the cytoplasmic vesicle membrane. It is found in the cytoskeleton. It localises to the cilium basal body. Promotes the release of prenylated target proteins from cellular membranes. Modulates the activity of prenylated or palmitoylated Ras family members by regulating their subcellular location. Required for normal ciliary targeting of farnesylated target proteins, such as INPP5E. Required for RAB28 localization to the cone cell outer segments in the retina. Modulates the subcellular location of target proteins by acting as a GTP specific dissociation inhibitor (GDI). Increases the affinity of ARL3 for GTP by several orders of magnitude. Stabilizes ARL3-GTP by decreasing the nucleotide dissociation rate. In Homo sapiens (Human), this protein is Retinal rod rhodopsin-sensitive cGMP 3',5'-cyclic phosphodiesterase subunit delta (PDE6D).